The sequence spans 444 residues: Xylose isomerase (444 aa).

Residues histidine 101 and aspartate 104 contribute to the active site. Mg(2+) is bound by residues glutamate 232, glutamate 268, histidine 271, aspartate 296, aspartate 307, aspartate 309, and aspartate 339.

It belongs to the xylose isomerase family. Homotetramer. The cofactor is Mg(2+).

It localises to the cytoplasm. It carries out the reaction alpha-D-xylose = alpha-D-xylulofuranose. This chain is Xylose isomerase, found in Thermotoga sp. (strain RQ2).